A 311-amino-acid polypeptide reads, in one-letter code: Dehydrogenase/reductase SDR family member 7C (311 aa).

Residues 1-18 (MGIMAVLMLPLLLLGVSG) form the signal peptide. Residues Ser-47, Leu-49, Tyr-191, Lys-195, and Ser-226 each contribute to the NAD(+) site. The active-site Proton acceptor is Tyr-191.

The protein belongs to the short-chain dehydrogenases/reductases (SDR) family. Expressed in skeletal muscle, cardiac muscle and skin.

It is found in the sarcoplasmic reticulum membrane. It catalyses the reaction all-trans-retinol + NAD(+) = all-trans-retinal + NADH + H(+). NADH-dependent oxidoreductase which catalyzes the oxidation of all-trans-retinol to all-trans-retinal. Plays a role in the regulation of cardiac and skeletal muscle metabolic functions. Maintains Ca(2+) intracellular homeostasis by repressing Ca(2+) release from the sarcoplasmic reticulum (SR) in myotubes, possibly through local alternations in NAD/NADH or retinol/retinal. Also plays a role in Ca(2+) homeostasis by controlling Ca(2+) overload in the cytosol and the SR in myotubes. Involved in glucose uptake into skeletal muscles and muscle performance by activating PI3K and mTORC2-mediated AKT1 phosphorylation signaling pathways, possibly through the action of its downstream catalytic product all-trans-retinoic acid. This chain is Dehydrogenase/reductase SDR family member 7C, found in Rattus norvegicus (Rat).